The chain runs to 353 residues: Ribosomal RNA large subunit methyltransferase M (353 aa).

Residues Ser-179, Ala-212–Gly-215, Asp-231, Asp-251, and Asp-267 each bind S-adenosyl-L-methionine. Catalysis depends on Lys-296, which acts as the Proton acceptor.

This sequence belongs to the class I-like SAM-binding methyltransferase superfamily. RNA methyltransferase RlmE family. RlmM subfamily. In terms of assembly, monomer.

It localises to the cytoplasm. The enzyme catalyses cytidine(2498) in 23S rRNA + S-adenosyl-L-methionine = 2'-O-methylcytidine(2498) in 23S rRNA + S-adenosyl-L-homocysteine + H(+). In terms of biological role, catalyzes the 2'-O-methylation at nucleotide C2498 in 23S rRNA. The protein is Ribosomal RNA large subunit methyltransferase M of Laribacter hongkongensis (strain HLHK9).